Reading from the N-terminus, the 163-residue chain is C-type lectin lectoxin-Lio2 (163 aa).

Positions 1 to 21 are cleaved as a signal peptide; the sequence is MERFIFAALLVVALSLSGTGA. 3 disulfide bridges follow: C25–C36, C53–C152, and C127–C144. Residues 32-153 form the C-type lectin domain; it reads SDGYCYKVFK…CRSKRYFICK (122 aa). Residues 117–119 carry the Mannose-binding motif; it reads EPN. Residues E125 and D141 each contribute to the Ca(2+) site.

This sequence belongs to the true venom lectin family. As to expression, expressed by the venom gland.

The protein localises to the secreted. Functionally, mannose-binding lectin which recognizes specific carbohydrate structures and agglutinates a variety of animal cells by binding to cell-surface glycoproteins and glycolipids. May be a calcium-dependent lectin. The polypeptide is C-type lectin lectoxin-Lio2 (Erythrolamprus poecilogyrus (Water snake)).